The sequence spans 160 residues: MHILKKPDLSDPKMRAKLAKGMGHNYYGEPAWPNDLLYIFPVVILGTIACIVGLAVLDPAMLADKADPFATPLEILPEWYLYPVFQILRVVPNKLLGIALQTLVPLGLMLVPFIESFNKFQNPFRRPVAMTVFLFGTVTTIYLGIGAALPIDKSLTLGLF.

A run of 3 helical transmembrane segments spans residues 36–56 (LLYI…GLAV), 95–115 (LLGI…PFIE), and 131–151 (TVFL…ALPI).

It belongs to the cytochrome b family. PetD subfamily. In terms of assembly, the 4 large subunits of the cytochrome b6-f complex are cytochrome b6, subunit IV (17 kDa polypeptide, PetD), cytochrome f and the Rieske protein, while the 4 small subunits are PetG, PetL, PetM and PetN. The complex functions as a dimer.

The protein localises to the cellular thylakoid membrane. Component of the cytochrome b6-f complex, which mediates electron transfer between photosystem II (PSII) and photosystem I (PSI), cyclic electron flow around PSI, and state transitions. The chain is Cytochrome b6-f complex subunit 4 from Parasynechococcus marenigrum (strain WH8102).